The following is a 78-amino-acid chain: Putative membrane protein insertion efficiency factor (78 aa).

Belongs to the UPF0161 family.

It is found in the cell inner membrane. Its function is as follows. Could be involved in insertion of integral membrane proteins into the membrane. This is Putative membrane protein insertion efficiency factor from Prochlorococcus marinus (strain MIT 9301).